The sequence spans 115 residues: NAD(P)H-quinone oxidoreductase subunit M (115 aa).

This sequence belongs to the complex I NdhM subunit family. In terms of assembly, NDH-1 can be composed of about 15 different subunits; different subcomplexes with different compositions have been identified which probably have different functions.

It localises to the cellular thylakoid membrane. It catalyses the reaction a plastoquinone + NADH + (n+1) H(+)(in) = a plastoquinol + NAD(+) + n H(+)(out). It carries out the reaction a plastoquinone + NADPH + (n+1) H(+)(in) = a plastoquinol + NADP(+) + n H(+)(out). NDH-1 shuttles electrons from an unknown electron donor, via FMN and iron-sulfur (Fe-S) centers, to quinones in the respiratory and/or the photosynthetic chain. The immediate electron acceptor for the enzyme in this species is believed to be plastoquinone. Couples the redox reaction to proton translocation, and thus conserves the redox energy in a proton gradient. Cyanobacterial NDH-1 also plays a role in inorganic carbon-concentration. This Synechococcus sp. (strain CC9605) protein is NAD(P)H-quinone oxidoreductase subunit M.